Reading from the N-terminus, the 343-residue chain is Dimethyladenosine transferase 1, mitochondrial (343 aa).

A mitochondrion-targeting transit peptide spans 1-27 (MAASGKLSTWRLPPLPTIREIIKLLRV). S-adenosyl-L-methionine-binding residues include Leu-38, Gly-63, Glu-85, Lys-86, Asp-111, Val-112, and Asn-141.

Belongs to the class I-like SAM-binding methyltransferase superfamily. rRNA adenine N(6)-methyltransferase family. KsgA subfamily. In terms of assembly, interacts with mitochondrial RNA polymerase POLRMT. Interacts with TFAM. Bound to the maturing mtSSU until the late stages of assembly.

The protein localises to the mitochondrion. It catalyses the reaction adenosine(N)/adenosine(N+1) in rRNA + 4 S-adenosyl-L-methionine = N(6)-dimethyladenosine(N)/N(6)-dimethyladenosine(N+1) in rRNA + 4 S-adenosyl-L-homocysteine + 4 H(+). Its function is as follows. S-adenosyl-L-methionine-dependent methyltransferase which specifically dimethylates mitochondrial 12S rRNA at the conserved stem loop. Also required for basal transcription of mitochondrial DNA, probably via its interaction with POLRMT and TFAM. Stimulates transcription independently of the methyltransferase activity. In terms of biological role, mitochondrial methyltransferase which uses S-adenosyl methionine to dimethylate two highly conserved adjacent adenosine residues (A1583 and A1584) within the loop of helix 45 at the 3-prime end of 12S rRNA, thereby regulating the assembly or stability of the small subunit of the mitochondrial ribosome. Also required for basal transcription of mitochondrial DNA, probably via its interaction with POLRMT and TFAM. Stimulates transcription independently of the methyltransferase activity. In Pongo abelii (Sumatran orangutan), this protein is Dimethyladenosine transferase 1, mitochondrial (TFB1M).